Consider the following 146-residue polypeptide: Large ribosomal subunit protein uL15 (146 aa).

Over residues 1-10 the composition is skewed to basic and acidic residues; sequence MTLKLHDLRP. The segment at 1-41 is disordered; sequence MTLKLHDLRPARGSKTARTRVGRGDGSKGKTAGRGTKGTRA.

It belongs to the universal ribosomal protein uL15 family. Part of the 50S ribosomal subunit.

Its function is as follows. Binds to the 23S rRNA. The sequence is that of Large ribosomal subunit protein uL15 from Mycobacterium bovis (strain BCG / Pasteur 1173P2).